Consider the following 177-residue polypeptide: B-phycoerythrin beta chain (177 aa).

Phycourobilin-binding residues include cysteine 50 and cysteine 61. Asparagine 72 carries the N4-methylasparagine modification. (2R,3E)-phycoerythrobilin-binding residues include cysteine 82 and cysteine 158.

The protein belongs to the phycobiliprotein family. Heteromer of 6 alpha, 6 beta and one gamma chain. Post-translationally, contains two covalently linked phycoerythrobilin chromophores and one covalently linked phycourobilin chromophore.

The protein resides in the plastid. It localises to the chloroplast thylakoid membrane. Light-harvesting photosynthetic bile pigment-protein from the phycobiliprotein complex. This is B-phycoerythrin beta chain (cpeB) from Rhodella violacea (Red alga).